A 165-amino-acid polypeptide reads, in one-letter code: Transmembrane protein 253 (165 aa).

3 helical membrane-spanning segments follow: residues 31 to 51 (LVLA…AVSV), 60 to 80 (MTTA…IVTL), and 91 to 111 (LAGL…GVLV). Positions 145–165 (EEVPELETGPTVASTAKRTNQ) are disordered. The segment covering 155–165 (TVASTAKRTNQ) has biased composition (polar residues).

The protein localises to the membrane. The polypeptide is Transmembrane protein 253 (TMEM253) (Bos taurus (Bovine)).